A 433-amino-acid chain; its full sequence is Mblk-1-related factor 1 (433 aa).

One can recognise an HTH psq-type 1 domain in the interval 145–197; that stretch reads NKSNILRRNYTVEDLTQAVEDIRQGKLGTRRASVVYGIPRSTLRNKIYKLEAE. The H-T-H motif DNA-binding region spans 173–193; sequence TRRASVVYGIPRSTLRNKIYK. The segment covering 235–254 has biased composition (low complexity); sequence GNQSDSSSSSPHASMCPSSP. 2 disordered regions span residues 235-278 and 304-338; these read GNQS…SCSP and ANIS…PKRG. The segment covering 304–319 has biased composition (polar residues); it reads ANISNVDTHTPTPISE. Residues 320-332 show a composition bias toward basic and acidic residues; that stretch reads KSQKMHGNEEWKR. In terms of domain architecture, HTH psq-type 2 spans 334-386; the sequence is RPKRGQYRKYDKNALDEAVRSVRRGEMTVHRAGSFFGVPHSTLEYKVKERNLM. The segment at residues 362–382 is a DNA-binding region (H-T-H motif); the sequence is VHRAGSFFGVPHSTLEYKVKE. A disordered region spans residues 393–433; it reads LYSHDSSTSEDGSQLVTSTISEKSDSSSHTSTPIPFPISLV. The span at 396 to 408 shows a compositional bias: polar residues; that stretch reads HDSSTSEDGSQLV. The segment covering 409–424 has biased composition (low complexity); the sequence is TSTISEKSDSSSHTST.

In terms of tissue distribution, expressed in AIM, RIC, AIZ, ADF, ADL, ASK, AWA, AUA, AIN, RIH (or RIR) and RIF head neurons and, in PVP, PVQ and DVA (or DVC) tail neurons, some intestinal cells, somatic gonad and vulva.

It is found in the nucleus. Its function is as follows. May act as transcription activator. Plays a role in neurogenesis by regulating neurite pruning between left and right AIM neurons and left and right RIF neurons during larval development. Regulates olfactory plasticity. This Caenorhabditis elegans protein is Mblk-1-related factor 1.